The chain runs to 478 residues: Glutamate--tRNA ligase (478 aa).

The 'HIGH' region motif lies at 23–33 (PSPTGFIHLGN). Basic and acidic residues predominate over residues 130-145 (KQKPRYDGTWRPEEGK). Residues 130–153 (KQKPRYDGTWRPEEGKTLPPVPEG) form a disordered region. The short motif at 255–259 (KMSKR) is the 'KMSKS' region element. K258 serves as a coordination point for ATP.

Belongs to the class-I aminoacyl-tRNA synthetase family. Glutamate--tRNA ligase type 1 subfamily. In terms of assembly, monomer.

It localises to the cytoplasm. The enzyme catalyses tRNA(Glu) + L-glutamate + ATP = L-glutamyl-tRNA(Glu) + AMP + diphosphate. Its function is as follows. Catalyzes the attachment of glutamate to tRNA(Glu) in a two-step reaction: glutamate is first activated by ATP to form Glu-AMP and then transferred to the acceptor end of tRNA(Glu). The polypeptide is Glutamate--tRNA ligase (Paracidovorax citrulli (strain AAC00-1) (Acidovorax citrulli)).